The chain runs to 817 residues: LisH domain-containing protein ARMC9 (817 aa).

The LisH domain maps to 7-39 (HESELLGLVKEYLDFAEFEDTLKTFSKECKVKG). Residues 204-230 (GPNSKELLQQLHQQLVEAERRAMTYLK) are a coiled coil. Position 583 is a phosphoserine (serine 583). Disordered regions lie at residues 637–659 (RKGP…TPGG) and 761–817 (CKPQ…SIRK). The span at 765–774 (VPSTPETVEQ) shows a compositional bias: polar residues. Positions 793–807 (PQQASRPASTASSTR) are enriched in low complexity. Positions 808-817 (GLHSSQSIRK) are enriched in polar residues.

As to quaternary structure, interacts with TOGARAM1, CCDC66, CEP104, CSPP1 and CEP290. Interacts with NDUFAF2.

Its subcellular location is the cytoplasm. It localises to the cytoskeleton. The protein resides in the cilium basal body. It is found in the cell projection. The protein localises to the cilium. Its subcellular location is the microtubule organizing center. It localises to the centrosome. The protein resides in the centriole. Its function is as follows. Involved in ciliogenesis. It is required for appropriate acetylation and polyglutamylation of ciliary microtubules, and regulation of cilium length. Acts as a positive regulator of hedgehog (Hh) signaling. May participate in the trafficking and/or retention of GLI2 and GLI3 proteins at the ciliary tip. The protein is LisH domain-containing protein ARMC9 of Mus musculus (Mouse).